The primary structure comprises 275 residues: Autophagy protein 5 (275 aa).

Position 1 is an N-acetylmethionine (methionine 1). Residue lysine 130 forms a Glycyl lysine isopeptide (Lys-Gly) (interchain with G-Cter in ATG12) linkage.

It belongs to the ATG5 family. As to quaternary structure, forms a conjugate with ATG12. Part of the minor complex composed of 4 sets of ATG12-ATG5 and ATG16L1 (400 kDa); this complex interacts with ATG3 leading to disruption of ATG7 interaction and promotion of ATG8-like proteins lipidation. Forms an 800-kDa complex composed of ATG12-ATG5 and ATG16L2. The ATG12-ATG5 conjugate interacts with RAB33A; this interaction is bridged by ATG16L1 and promotes ATG12-ATG5-ATG16L1 complex recruitment to phagophores. Interacts with TECPR1; the interaction is direct and does not take place when ATG16L1 is associated with the ATG5-ATG12 conjugate. Interacts with DHX58/RIG-1, IFIH1/MDA5 and MAVS/IPS-1 in monomeric form as well as in ATG12-ATG5 conjugate form. The interaction with MAVS is further enhanced upon vesicular stomatitis virus (VSV) infection. Interacts with ATG3. Interacts with ATG7 and ATG10. Interacts with FADD. Interacts with Bassoon/BSN; this interaction is important for the regulation of presynaptic autophagy. Interacts with ATG16L2. Conjugated to ATG12; which is essential for autophagy, but is not required for association with isolation membrane. In terms of processing, acetylated by EP300. As to expression, ubiquitous.

The protein localises to the cytoplasm. It localises to the preautophagosomal structure membrane. Its function is as follows. Involved in autophagic vesicle formation. Conjugation with ATG12, through a ubiquitin-like conjugating system involving ATG7 as an E1-like activating enzyme and ATG10 as an E2-like conjugating enzyme, is essential for its function. The ATG12-ATG5 conjugate acts as an E3-like enzyme which is required for lipidation of ATG8 family proteins and their association to the vesicle membranes. Involved in mitochondrial quality control after oxidative damage, and in subsequent cellular longevity. Plays a critical role in multiple aspects of lymphocyte development and is essential for both B and T lymphocyte survival and proliferation. Required for optimal processing and presentation of antigens for MHC II. Involved in the maintenance of axon morphology and membrane structures, as well as in normal adipocyte differentiation. Promotes primary ciliogenesis through removal of OFD1 from centriolar satellites and degradation of IFT20 via the autophagic pathway. As part of the ATG8 conjugation system with ATG12 and ATG16L1, required for recruitment of LRRK2 to stressed lysosomes and induction of LRRK2 kinase activity in response to lysosomal stress. May play an important role in the apoptotic process, possibly within the modified cytoskeleton. Its expression is a relatively late event in the apoptotic process, occurring downstream of caspase activity. Plays a crucial role in IFN-gamma-induced autophagic cell death by interacting with FADD. Functionally, (Microbial infection) May act as a proviral factor. In association with ATG12, negatively regulates the innate antiviral immune response by impairing the type I IFN production pathway upon vesicular stomatitis virus (VSV) infection. In Mus musculus (Mouse), this protein is Autophagy protein 5.